Reading from the N-terminus, the 167-residue chain is Small ribosomal subunit protein uS5 (167 aa).

Residues 11 to 74 (LQEKLIAVNR…EKARRNMINV (64 aa)) enclose the S5 DRBM domain.

The protein belongs to the universal ribosomal protein uS5 family. As to quaternary structure, part of the 30S ribosomal subunit. Contacts proteins S4 and S8.

With S4 and S12 plays an important role in translational accuracy. Its function is as follows. Located at the back of the 30S subunit body where it stabilizes the conformation of the head with respect to the body. The chain is Small ribosomal subunit protein uS5 from Escherichia coli O139:H28 (strain E24377A / ETEC).